The primary structure comprises 420 residues: LanC-like protein 3 (420 aa).

It belongs to the LanC-like protein family.

The sequence is that of LanC-like protein 3 (LANCL3) from Homo sapiens (Human).